The chain runs to 163 residues: ATP synthase subunit b', chloroplastic (163 aa).

Residues 26–46 (ATLPLMAVQILLFMVILNAVF) traverse the membrane as a helical segment.

It belongs to the ATPase B chain family. As to quaternary structure, F-type ATPases have 2 components, F(1) - the catalytic core - and F(0) - the membrane proton channel. F(1) has five subunits: alpha(3), beta(3), gamma(1), delta(1), epsilon(1). F(0) has four main subunits: a(1), b(1), b'(1) and c(10-14). The alpha and beta chains form an alternating ring which encloses part of the gamma chain. F(1) is attached to F(0) by a central stalk formed by the gamma and epsilon chains, while a peripheral stalk is formed by the delta, b and b' chains.

It localises to the plastid. Its subcellular location is the chloroplast thylakoid membrane. Its function is as follows. F(1)F(0) ATP synthase produces ATP from ADP in the presence of a proton or sodium gradient. F-type ATPases consist of two structural domains, F(1) containing the extramembraneous catalytic core and F(0) containing the membrane proton channel, linked together by a central stalk and a peripheral stalk. During catalysis, ATP synthesis in the catalytic domain of F(1) is coupled via a rotary mechanism of the central stalk subunits to proton translocation. Functionally, component of the F(0) channel, it forms part of the peripheral stalk, linking F(1) to F(0). The b'-subunit is a diverged and duplicated form of b found in plants and photosynthetic bacteria. This chain is ATP synthase subunit b', chloroplastic, found in Guillardia theta (Cryptophyte).